The following is a 506-amino-acid chain: Probable UTP--glucose-1-phosphate uridylyltransferase (506 aa).

A phosphoserine mark is found at serine 15 and serine 17. Residues 115 to 118 (LNGG), lysine 129, glutamine 192, and glycine 221 contribute to the UTP site. 117–118 (GG) is a substrate binding site. Lysine 129 is a Mg(2+) binding site. Residues histidine 222 and 250 to 252 (NID) each bind substrate. UTP contacts are provided by aspartate 252 and lysine 394. Residue aspartate 252 coordinates Mg(2+). The active site involves lysine 394. An oligomerization region spans residues 455-506 (HLTITGDVNIGRNVTLKGTVIIVASDANRIDIPNGSVLENCVITGNLNILEH).

This sequence belongs to the UDPGP type 1 family. As to quaternary structure, homooctamer.

It is found in the cytoplasm. The protein resides in the nucleus. It catalyses the reaction alpha-D-glucose 1-phosphate + UTP + H(+) = UDP-alpha-D-glucose + diphosphate. Functionally, plays a central role as a glucosyl donor in cellular metabolic pathways. In Schizosaccharomyces pombe (strain 972 / ATCC 24843) (Fission yeast), this protein is Probable UTP--glucose-1-phosphate uridylyltransferase (fyu1).